A 312-amino-acid polypeptide reads, in one-letter code: uncharacterized protein (312 aa).

It localises to the mitochondrion. This is an uncharacterized protein from Schizosaccharomyces pombe (strain 972 / ATCC 24843) (Fission yeast).